The sequence spans 492 residues: Zinc finger protein 385B (492 aa).

2 Matrin-type zinc fingers span residues 8-44 (KKLL…VKQL) and 143-173 (ISCN…KLKA). The disordered stretch occupies residues 159 to 206 (EAHYKGSKHAKKLKAQESPKNKQKSAVAQDSGTKTITSTSTNTTTTTT). The span at 189-206 (SGTKTITSTSTNTTTTTT) shows a compositional bias: low complexity. 2 consecutive Matrin-type zinc fingers follow at residues 303–337 (KKLL…LEAR) and 371–401 (FHCE…RVAG). The segment at 388–420 (QHISSRRHKDRVAGKPTKPKYSPYNKQQRSSSS) is disordered.

The protein resides in the nucleus. Functionally, may play a role in p53/TP53-mediated apoptosis. In Danio rerio (Zebrafish), this protein is Zinc finger protein 385B (znf385b).